A 363-amino-acid chain; its full sequence is Diheme-cytochrome-encapsulin shell fusion protein (363 aa).

An N-terminal signal peptide occupies residues 1–36 (MVMGILNTFKKVYAVTGFFALLAVFSLSQVGSSAFA). Positions 37-74 (ACAKVDDCFSCHTTQELNAVHKNTPYQGQSCIVCHKAF) are diheme c-type cytochrome. Heme is bound by residues C44, C47, H48, C67, C70, and H71. The tract at residues 75-94 (AADDTCSDAKDGRFAKISSE) is linker. Residues 95–363 (ININKEDWNK…KCPQAICTLE (269 aa)) are encapsulin domain.

The protein belongs to the encapsulin family. Family 1 subfamily. In terms of assembly, the encapsulin nanocompartment is probably formed by 180 monomers, with the N-terminus (diheme domain) inside. There are 36 pores where the pentamers meet as well as 3-fold axis channels and dimer channels. Heme is required as a cofactor.

It is found in the encapsulin nanocompartment. Fusion of the shell and cargo protein of a type 1 encapsulin nanocompartment. Protein missing its signal peptide makes 33 nm particles in E.coli (called cEnc), protein missing its signal peptide and diheme domain (residues 1-86, called Enc) makes 29 nm particles. The cEnc nancompartment encloses c-type heme. The cargo protein NIR-HAO (AC P0DV45) is probably targeted to the nanocompartment by its association with the diheme domain in cEnc; removal of the diheme domain in Enc halves the amount of cargo. The sequence is that of Diheme-cytochrome-encapsulin shell fusion protein from Kuenenia stuttgartiensis.